Reading from the N-terminus, the 446-residue chain is High mobility group B protein 13 (446 aa).

Disordered regions lie at residues 1 to 43 (MSTV…TKSF) and 110 to 130 (LAQT…AETK). The span at 11–22 (AKKSRNSRKALK) shows a compositional bias: basic residues. 2 consecutive DNA-binding regions (HMG box) follow at residues 129-197 (TKRP…TKEK) and 246-312 (PKQP…EGYK). Basic and acidic residues predominate over residues 349-371 (NIIKKTKETAKNKKKNENVDPNK). The interval 349–377 (NIIKKTKETAKNKKKNENVDPNKPKKPTS) is disordered. The segment at residues 372 to 440 (PKKPTSSYFL…AYKKEVEEYN (69 aa)) is a DNA-binding region (HMG box 3).

The protein belongs to the HMGB family.

It localises to the nucleus. In Arabidopsis thaliana (Mouse-ear cress), this protein is High mobility group B protein 13 (HMGB13).